A 967-amino-acid polypeptide reads, in one-letter code: MAELNFKAIEEKWQKRWMEDRVFEPDRNAKPKEKKFYITVAFPYLSGHLHVGHARTYTIPDVIARFKRMQGYNVLFPMAWHITGAPIVGIAERIKNRDPKTIHIYRDVYKVPEEILWKFEDPKEIVKYFMKAARETFIRAGFSVDWSREFHTTSLFPPFSKFIEWQFWTLKDMGLVVKGAHRVRWDPVVGTPLGDHDIMEGEDVQILEYVIIKFILEENGEEIYMPAATLRPETVYGVTNMWLNPEAIYVKAKVRRGDREETWIISKEAAYKLSFQDREIEVIEEFKGERLIGKYVKNPVTGDEVIILPAEFVDPDNATGVVMSVPAHAPFDHVALEDLKKETEILLKYDIDPRVVEEISYISLIKLEGYGEFPAVEEVEKLGVKSQKDEEKLEEATKNIYKAEYHKGVFKIEPYAGKPVQEVKDLIAKELQEKGIAEIMYEFAEKPVISRFGNQAVIKIIHDQWFIDYGNPEWKEKAREALANMTIYPESRRTQFEAVIDWLDKKACARKVGLGTPLPWDPEWVIESLSDSTIYMAYYTISRHINKLREEGRLDPEKLDREFFDYLFREEFSEEREKELAEKTGIPAEIIHEMKEEFEYWYPLDWRCSAKDLIPNHLTFFIFNHVAIFRKGHWPRGIAVNGFGTLEGQKMSKSKGNVLNFIDAIEENGADVVRLYIMGLAEHDSDFDWRRKEVGKLRKQVERFYELVSEFASYEAKEGVELKDIDRWMLHRLNKAIEGATKGLEEFRTRTAVQWAFYSVLNDLRWYLRRTEGRDDEAKRYVLRTLADVWVRLMAPFTPHISEELWEKLGGEGFVSLAKWPEPNPAWWNETIELEEEYVKNLIEDIKEIIRVAKIEDAKRAYIYTAPEWKWRVAEAVAEKRDFKAAMSELMKDPEMRKHGKEISKMIQRLIKDRAFEIKRIDEEKALREAKDFIEKELGLEIIINPEEDKGGKKKAAMPMKPAVFVE.

The 'HIGH' region motif lies at 43 to 53; it reads PYLSGHLHVGH. Residues 650 to 654 carry the 'KMSKS' region motif; that stretch reads KMSKS. K653 provides a ligand contact to ATP.

It belongs to the class-I aminoacyl-tRNA synthetase family.

Its subcellular location is the cytoplasm. It carries out the reaction tRNA(Leu) + L-leucine + ATP = L-leucyl-tRNA(Leu) + AMP + diphosphate. The chain is Leucine--tRNA ligase from Thermococcus onnurineus (strain NA1).